Reading from the N-terminus, the 393-residue chain is Meiotic driver wtf19 (393 aa).

The disordered stretch occupies residues 1–98; the sequence is MKNKYYPLRS…SSGTADNSST (98 aa). The segment covering 11 to 29 has biased composition (basic and acidic residues); it reads SMDELSAKNDNEIDLEKGP. 2 stretches are compositionally biased toward polar residues: residues 57–72 and 89–98; these read GANN…STTP and SSGTADNSST. 8 helical membrane passes run 104-124, 137-157, 167-187, 208-228, 233-253, 269-289, 296-316, and 332-352; these read AFLS…YLTY, WVYF…LWYF, VTVI…AQCV, CVKV…IGLF, EMMI…FGCV, CTIS…FWTF, LAKV…TMFL, and VLFI…GALI.

It belongs to the WTF family. Homomer. Forms protein aggregates. The two isoforms can interact with each other and with themselves. High sequence similarity is required for their interaction.

It localises to the spore membrane. Its subcellular location is the vacuole membrane. The protein resides in the ascus epiplasm. It is found in the cytoplasm. The protein localises to the endoplasmic reticulum membrane. Functionally, promotes unequal transmission of alleles from the parental zygote to progeny spores by acting as poison/antidote system where the poison and antidote proteins are produced from the same locus; the poison component is trans-acting and targets all spores within an ascus whereas the antidote component is spore-specific, leading to poisoning of all progeny that do not inherit the allele. In terms of biological role, localizes isoform 2 to the vacuole thereby facilitating its degradation. Its function is as follows. Forms toxic aggregates that disrupt spore maturation. The sequence is that of Meiotic driver wtf19 from Schizosaccharomyces pombe (strain 972 / ATCC 24843) (Fission yeast).